Reading from the N-terminus, the 180-residue chain is Crossover junction endodeoxyribonuclease RuvC (180 aa).

Residues D7, E66, and D138 contribute to the active site. Mg(2+)-binding residues include D7, E66, and D138.

Belongs to the RuvC family. Homodimer which binds Holliday junction (HJ) DNA. The HJ becomes 2-fold symmetrical on binding to RuvC with unstacked arms; it has a different conformation from HJ DNA in complex with RuvA. In the full resolvosome a probable DNA-RuvA(4)-RuvB(12)-RuvC(2) complex forms which resolves the HJ. Requires Mg(2+) as cofactor.

The protein resides in the cytoplasm. The enzyme catalyses Endonucleolytic cleavage at a junction such as a reciprocal single-stranded crossover between two homologous DNA duplexes (Holliday junction).. In terms of biological role, the RuvA-RuvB-RuvC complex processes Holliday junction (HJ) DNA during genetic recombination and DNA repair. Endonuclease that resolves HJ intermediates. Cleaves cruciform DNA by making single-stranded nicks across the HJ at symmetrical positions within the homologous arms, yielding a 5'-phosphate and a 3'-hydroxyl group; requires a central core of homology in the junction. The consensus cleavage sequence is 5'-(A/T)TT(C/G)-3'. Cleavage occurs on the 3'-side of the TT dinucleotide at the point of strand exchange. HJ branch migration catalyzed by RuvA-RuvB allows RuvC to scan DNA until it finds its consensus sequence, where it cleaves and resolves the cruciform DNA. The protein is Crossover junction endodeoxyribonuclease RuvC of Paraburkholderia phytofirmans (strain DSM 17436 / LMG 22146 / PsJN) (Burkholderia phytofirmans).